Consider the following 1322-residue polypeptide: Phosphoribosylformylglycinamidine synthase (1322 aa).

300–311 serves as a coordination point for ATP; it reads GASTGAGGEIRD. Positions 593–608 are enriched in polar residues; sequence QQTPQRANHTETSPTP. The tract at residues 593-613 is disordered; sequence QQTPQRANHTETSPTPNTLPP. Ala-702 is an ATP binding site. Residues Asp-703, Glu-742, Asn-746, and Asp-915 each contribute to the Mg(2+) site. ATP is bound at residue Ser-917. The region spanning 1073–1322 is the Glutamine amidotransferase type-1 domain; that stretch reads VAILREQGIN…LFRNARAWVG (250 aa). The active-site Nucleophile is Cys-1166. Active-site residues include His-1287 and Glu-1289.

In the N-terminal section; belongs to the FGAMS family. In terms of assembly, monomer.

The protein localises to the cytoplasm. The catalysed reaction is N(2)-formyl-N(1)-(5-phospho-beta-D-ribosyl)glycinamide + L-glutamine + ATP + H2O = 2-formamido-N(1)-(5-O-phospho-beta-D-ribosyl)acetamidine + L-glutamate + ADP + phosphate + H(+). It functions in the pathway purine metabolism; IMP biosynthesis via de novo pathway; 5-amino-1-(5-phospho-D-ribosyl)imidazole from N(2)-formyl-N(1)-(5-phospho-D-ribosyl)glycinamide: step 1/2. Phosphoribosylformylglycinamidine synthase involved in the purines biosynthetic pathway. Catalyzes the ATP-dependent conversion of formylglycinamide ribonucleotide (FGAR) and glutamine to yield formylglycinamidine ribonucleotide (FGAM) and glutamate. This Xylella fastidiosa (strain 9a5c) protein is Phosphoribosylformylglycinamidine synthase.